A 298-amino-acid polypeptide reads, in one-letter code: Bifunctional protein FolD (298 aa).

NADP(+) is bound by residues 165-167 (GRS), S190, and I231.

It belongs to the tetrahydrofolate dehydrogenase/cyclohydrolase family. As to quaternary structure, homodimer.

It catalyses the reaction (6R)-5,10-methylene-5,6,7,8-tetrahydrofolate + NADP(+) = (6R)-5,10-methenyltetrahydrofolate + NADPH. It carries out the reaction (6R)-5,10-methenyltetrahydrofolate + H2O = (6R)-10-formyltetrahydrofolate + H(+). It participates in one-carbon metabolism; tetrahydrofolate interconversion. Catalyzes the oxidation of 5,10-methylenetetrahydrofolate to 5,10-methenyltetrahydrofolate and then the hydrolysis of 5,10-methenyltetrahydrofolate to 10-formyltetrahydrofolate. The chain is Bifunctional protein FolD from Prochlorococcus marinus subsp. pastoris (strain CCMP1986 / NIES-2087 / MED4).